The chain runs to 140 residues: 3-hydroxyacyl-[acyl-carrier-protein] dehydratase FabZ (140 aa).

The active site involves histidine 47.

This sequence belongs to the thioester dehydratase family. FabZ subfamily.

It localises to the cytoplasm. The catalysed reaction is a (3R)-hydroxyacyl-[ACP] = a (2E)-enoyl-[ACP] + H2O. In terms of biological role, involved in unsaturated fatty acids biosynthesis. Catalyzes the dehydration of short chain beta-hydroxyacyl-ACPs and long chain saturated and unsaturated beta-hydroxyacyl-ACPs. This Streptococcus mutans serotype c (strain ATCC 700610 / UA159) protein is 3-hydroxyacyl-[acyl-carrier-protein] dehydratase FabZ.